Here is a 301-residue protein sequence, read N- to C-terminus: Oxygen-dependent coproporphyrinogen-III oxidase (301 aa).

Ser90 is a binding site for substrate. 2 residues coordinate a divalent metal cation: His94 and His104. His104 acts as the Proton donor in catalysis. 106–108 is a substrate binding site; sequence NVR. A divalent metal cation contacts are provided by His143 and His173. Residues 238 to 273 are important for dimerization; that stretch reads YVEFNLVWDRGTLFGLQSGGRTESILMSLPPIVKWR. Residue 256–258 participates in substrate binding; sequence GGR.

Belongs to the aerobic coproporphyrinogen-III oxidase family. In terms of assembly, homodimer. It depends on a divalent metal cation as a cofactor.

Its subcellular location is the cytoplasm. It carries out the reaction coproporphyrinogen III + O2 + 2 H(+) = protoporphyrinogen IX + 2 CO2 + 2 H2O. It participates in porphyrin-containing compound metabolism; protoporphyrin-IX biosynthesis; protoporphyrinogen-IX from coproporphyrinogen-III (O2 route): step 1/1. Functionally, involved in the heme biosynthesis. Catalyzes the aerobic oxidative decarboxylation of propionate groups of rings A and B of coproporphyrinogen-III to yield the vinyl groups in protoporphyrinogen-IX. The protein is Oxygen-dependent coproporphyrinogen-III oxidase of Nitrosomonas eutropha (strain DSM 101675 / C91 / Nm57).